The primary structure comprises 332 residues: Succinylglutamate desuccinylase (332 aa).

The Zn(2+) site is built by His59, Glu62, and His151. The active site involves Glu215.

Belongs to the AspA/AstE family. Succinylglutamate desuccinylase subfamily. Requires Zn(2+) as cofactor.

The enzyme catalyses N-succinyl-L-glutamate + H2O = L-glutamate + succinate. The protein operates within amino-acid degradation; L-arginine degradation via AST pathway; L-glutamate and succinate from L-arginine: step 5/5. Functionally, transforms N(2)-succinylglutamate into succinate and glutamate. This chain is Succinylglutamate desuccinylase, found in Pseudomonas aeruginosa (strain LESB58).